The chain runs to 320 residues: Delta(7)-sterol 5(6)-desaturase erg3C (320 aa).

3 helical membrane passes run 43 to 63, 91 to 111, and 127 to 147; these read VISI…FFSA, SSLS…LAEV, and PWLV…IYWI. Positions 134–283 constitute a Fatty acid hydroxylase domain; that stretch reads ILYMAFNDIG…FTWADAYFGS (150 aa). The Histidine box-1 motif lies at 148 to 152; it reads HRLEH. Positions 161–165 match the Histidine box-2 motif; it reads HKPHH. A helical transmembrane segment spans residues 224 to 244; that stretch reads YMVLFAAVQIWTILIHDGDMI. Residues 259-263 carry the Histidine box-3 motif; that stretch reads HTLHH.

The protein belongs to the sterol desaturase family. Fe cation serves as cofactor.

It localises to the endoplasmic reticulum membrane. Functionally, delta(7)-sterol 5(6)-desaturase; part of the third module of ergosterol biosynthesis pathway that includes the late steps of the pathway. Erg3C is a minor delta(7)-sterol 5(6)-desaturase within the ergosterol pathway, erg3B being the major one. The third module or late pathway involves the ergosterol synthesis itself through consecutive reactions that mainly occur in the endoplasmic reticulum (ER) membrane. Firstly, the squalene synthase erg9 catalyzes the condensation of 2 farnesyl pyrophosphate moieties to form squalene, which is the precursor of all steroids. Squalene synthase is crucial for balancing the incorporation of farnesyl diphosphate (FPP) into sterol and nonsterol isoprene synthesis. Secondly, squalene is converted into lanosterol by the consecutive action of the squalene epoxidase erg1 and the lanosterol synthase erg7. Then, the delta(24)-sterol C-methyltransferase erg6 methylates lanosterol at C-24 to produce eburicol. Eburicol is the substrate of the sterol 14-alpha demethylase encoded by cyp51A and cyp51B, to yield 4,4,24-trimethyl ergosta-8,14,24(28)-trienol. The C-14 reductase erg24 then reduces the C14=C15 double bond which leads to 4,4-dimethylfecosterol. A sequence of further demethylations at C-4, involving the C-4 demethylation complex containing the C-4 methylsterol oxidases erg25A or erg25B, the sterol-4-alpha-carboxylate 3-dehydrogenase erg26 and the 3-keto-steroid reductase erg27, leads to the production of fecosterol via 4-methylfecosterol. The C-8 sterol isomerase erg2 then catalyzes the reaction which results in unsaturation at C-7 in the B ring of sterols and thus converts fecosterol to episterol. The sterol-C5-desaturase erg3B then catalyzes the introduction of a C-5 double bond in the B ring to produce 5-dehydroepisterol. The 2 other sterol-C5-desaturases, erg3A and erg3C, seem to be less important in ergosterol biosynthesis. The C-22 sterol desaturase erg5 further converts 5-dehydroepisterol into ergosta-5,7,22,24(28)-tetraen-3beta-ol by forming the C-22(23) double bond in the sterol side chain. Finally, ergosta-5,7,22,24(28)-tetraen-3beta-ol is substrate of the C-24(28) sterol reductases erg4A and erg4B to produce ergosterol. Possible alternative sterol biosynthetic pathways might exist from fecosterol to ergosterol, depending on the activities of the erg3 isoforms. This Aspergillus fumigatus (strain ATCC MYA-4609 / CBS 101355 / FGSC A1100 / Af293) (Neosartorya fumigata) protein is Delta(7)-sterol 5(6)-desaturase erg3C.